Consider the following 154-residue polypeptide: 6,7-dimethyl-8-ribityllumazine synthase (154 aa).

5-amino-6-(D-ribitylamino)uracil-binding positions include Phe22, 56 to 58 (AFE), and 80 to 82 (AVI). Residue 85 to 86 (AT) participates in (2S)-2-hydroxy-3-oxobutyl phosphate binding. Catalysis depends on His88, which acts as the Proton donor. Phe113 is a binding site for 5-amino-6-(D-ribitylamino)uracil. Arg127 lines the (2S)-2-hydroxy-3-oxobutyl phosphate pocket.

The protein belongs to the DMRL synthase family.

It catalyses the reaction (2S)-2-hydroxy-3-oxobutyl phosphate + 5-amino-6-(D-ribitylamino)uracil = 6,7-dimethyl-8-(1-D-ribityl)lumazine + phosphate + 2 H2O + H(+). It participates in cofactor biosynthesis; riboflavin biosynthesis; riboflavin from 2-hydroxy-3-oxobutyl phosphate and 5-amino-6-(D-ribitylamino)uracil: step 1/2. In terms of biological role, catalyzes the formation of 6,7-dimethyl-8-ribityllumazine by condensation of 5-amino-6-(D-ribitylamino)uracil with 3,4-dihydroxy-2-butanone 4-phosphate. This is the penultimate step in the biosynthesis of riboflavin. In Syntrophobacter fumaroxidans (strain DSM 10017 / MPOB), this protein is 6,7-dimethyl-8-ribityllumazine synthase.